The following is a 427-amino-acid chain: Serine hydroxymethyltransferase (427 aa).

Residues Leu122 and Gly126 to Leu128 contribute to the (6S)-5,6,7,8-tetrahydrofolate site. An N6-(pyridoxal phosphate)lysine modification is found at Lys231. Ser355–Phe357 contributes to the (6S)-5,6,7,8-tetrahydrofolate binding site.

This sequence belongs to the SHMT family. Homodimer. Requires pyridoxal 5'-phosphate as cofactor.

Its subcellular location is the cytoplasm. The catalysed reaction is (6R)-5,10-methylene-5,6,7,8-tetrahydrofolate + glycine + H2O = (6S)-5,6,7,8-tetrahydrofolate + L-serine. Its pathway is one-carbon metabolism; tetrahydrofolate interconversion. It participates in amino-acid biosynthesis; glycine biosynthesis; glycine from L-serine: step 1/1. Functionally, catalyzes the reversible interconversion of serine and glycine with tetrahydrofolate (THF) serving as the one-carbon carrier. This reaction serves as the major source of one-carbon groups required for the biosynthesis of purines, thymidylate, methionine, and other important biomolecules. Also exhibits THF-independent aldolase activity toward beta-hydroxyamino acids, producing glycine and aldehydes, via a retro-aldol mechanism. In Nostoc punctiforme (strain ATCC 29133 / PCC 73102), this protein is Serine hydroxymethyltransferase.